A 65-amino-acid polypeptide reads, in one-letter code: SPbeta prophage-derived uncharacterized protein YopU (65 aa).

This Bacillus subtilis (strain 168) protein is SPbeta prophage-derived uncharacterized protein YopU (yopU).